Consider the following 398-residue polypeptide: Probable L-tyrosine/L-aspartate decarboxylase (398 aa).

Residue lysine 242 is modified to N6-(pyridoxal phosphate)lysine.

Belongs to the group II decarboxylase family. MfnA subfamily. Pyridoxal 5'-phosphate serves as cofactor.

The catalysed reaction is L-tyrosine + H(+) = tyramine + CO2. It carries out the reaction L-aspartate + H(+) = beta-alanine + CO2. The protein operates within cofactor biosynthesis; methanofuran biosynthesis. It participates in cofactor biosynthesis; coenzyme A biosynthesis. Catalyzes the decarboxylation of L-tyrosine to produce tyramine for methanofuran biosynthesis. Can also catalyze the decarboxylation of L-aspartate to produce beta-alanine for coenzyme A (CoA) biosynthesis. The chain is Probable L-tyrosine/L-aspartate decarboxylase from Methanosarcina mazei (strain ATCC BAA-159 / DSM 3647 / Goe1 / Go1 / JCM 11833 / OCM 88) (Methanosarcina frisia).